The following is a 161-amino-acid chain: Putative esterase C31F10.02 (161 aa).

It belongs to the thioesterase PaaI family.

In Schizosaccharomyces pombe (strain 972 / ATCC 24843) (Fission yeast), this protein is Putative esterase C31F10.02.